The following is a 363-amino-acid chain: RNA exonuclease NGL1 (363 aa).

The transit peptide at 1–23 (MFTRRFIPVVQSTKQNIGKYVRK) directs the protein to the mitochondrion.

The protein belongs to the CCR4/nocturin family.

Its subcellular location is the mitochondrion. In Saccharomyces cerevisiae (strain ATCC 204508 / S288c) (Baker's yeast), this protein is RNA exonuclease NGL1 (NGL1).